A 134-amino-acid chain; its full sequence is Ribulose bisphosphate carboxylase small subunit (134 aa).

This sequence belongs to the RuBisCO small chain family. Heterohexadecamer of 8 large and 8 small subunits.

RuBisCO catalyzes two reactions: the carboxylation of D-ribulose 1,5-bisphosphate, the primary event in carbon dioxide fixation, as well as the oxidative fragmentation of the pentose substrate. Both reactions occur simultaneously and in competition at the same active site. Although the small subunit is not catalytic it is essential for maximal activity. This is Ribulose bisphosphate carboxylase small subunit from Bradyrhizobium diazoefficiens (strain JCM 10833 / BCRC 13528 / IAM 13628 / NBRC 14792 / USDA 110).